The sequence spans 318 residues: D-alanine--D-alanine ligase (318 aa).

An ATP-grasp domain is found at 116-315 (KQVWQSLGLP…FEQLSLAVLA (200 aa)). 146-201 (MSRLGDLVMVKPAQEGSSIGMAKVSNAQQLAAAIQQAFEYDDKVLLEQFIQGSEYT) contacts ATP. Mg(2+) contacts are provided by Asp-269, Glu-282, and Asn-284.

The protein belongs to the D-alanine--D-alanine ligase family. Mg(2+) serves as cofactor. The cofactor is Mn(2+).

It localises to the cytoplasm. The enzyme catalyses 2 D-alanine + ATP = D-alanyl-D-alanine + ADP + phosphate + H(+). It functions in the pathway cell wall biogenesis; peptidoglycan biosynthesis. Functionally, cell wall formation. This is D-alanine--D-alanine ligase from Pseudoalteromonas atlantica (strain T6c / ATCC BAA-1087).